Here is a 619-residue protein sequence, read N- to C-terminus: Translation initiation factor IF-2 (619 aa).

Residues 120-289 enclose the tr-type G domain; sequence PRPPIVTIMG…ILLLGEVEGY (170 aa). The segment at 129–136 is G1; it reads GHVDHGKT. 129-136 contacts GTP; that stretch reads GHVDHGKT. The G2 stretch occupies residues 154–158; the sequence is GITQK. Positions 176–179 are G3; that stretch reads DTPG. Residues 176-180 and 230-233 each bind GTP; these read DTPGH and NKMD. Residues 230–233 form a G4 region; it reads NKMD. Positions 266 to 268 are G5; that stretch reads SAL.

It belongs to the TRAFAC class translation factor GTPase superfamily. Classic translation factor GTPase family. IF-2 subfamily.

It is found in the cytoplasm. Functionally, one of the essential components for the initiation of protein synthesis. Protects formylmethionyl-tRNA from spontaneous hydrolysis and promotes its binding to the 30S ribosomal subunits. Also involved in the hydrolysis of GTP during the formation of the 70S ribosomal complex. This chain is Translation initiation factor IF-2 (infB), found in Mycoplasma genitalium (strain ATCC 33530 / DSM 19775 / NCTC 10195 / G37) (Mycoplasmoides genitalium).